Reading from the N-terminus, the 317-residue chain is Ribosomal protein L11 methyltransferase (317 aa).

Residues threonine 158, glycine 179, aspartate 201, and asparagine 244 each contribute to the S-adenosyl-L-methionine site.

This sequence belongs to the methyltransferase superfamily. PrmA family.

It localises to the cytoplasm. The enzyme catalyses L-lysyl-[protein] + 3 S-adenosyl-L-methionine = N(6),N(6),N(6)-trimethyl-L-lysyl-[protein] + 3 S-adenosyl-L-homocysteine + 3 H(+). Methylates ribosomal protein L11. This Streptococcus thermophilus (strain CNRZ 1066) protein is Ribosomal protein L11 methyltransferase.